A 410-amino-acid chain; its full sequence is Mitochondrial potassium channel (410 aa).

A mitochondrion-targeting transit peptide spans 1-35 (MTGCSPVFTMQQVVGVSHRLVWRTFRGTDLLMTRT). Residues 36–201 (LCSPGPSRPG…KERTRAERTK (166 aa)) lie on the Mitochondrial matrix side of the membrane. Positions 116-143 (VREAREDLEAQQTKLKEVRDRLDRVSRE) form a coiled coil. The helical transmembrane segment at 202–222 (NWSLIGSVLGALIGVAGSTYV) threads the bilayer. The Mitochondrial intermembrane segment spans residues 223-385 (NRVRLQELKA…RLEAQANRNA (163 aa)). The tract at residues 276–296 (GQDQGSGSPTGPSSPRGKDID) is disordered. Low complexity predominate over residues 280–290 (GSGSPTGPSSP). Residues 386-406 (ISSTLVTCVTFMATLPLLYML) form a helical membrane-spanning segment. Residues 407-410 (FKTS) are Mitochondrial matrix-facing.

In terms of assembly, the mitochondrial potassium channel (mitoK(ATP)) forms a heteromultimer.

It localises to the mitochondrion inner membrane. It carries out the reaction K(+)(in) = K(+)(out). With respect to regulation, channel activity inhibited by ATP via ABCB8/MITOSUR subunit. In terms of biological role, pore-forming subunit of the mitochondrial ATP-gated potassium channel (mitoK(ATP)). Together with ATP-binding subunit ABCB8/MITOSUR of the mitoK(ATP) channel, mediates ATP-dependent K(+) currents across the mitochondrial inner membrane. An increase in ATP intracellular levels closes the channel, inhibiting K(+) transport, whereas a decrease in ATP levels enhances K(+) uptake in the mitochondrial matrix. May contribute to the homeostatic control of cellular metabolism under stress conditions by regulating the mitochondrial matrix volume. The polypeptide is Mitochondrial potassium channel (Rattus norvegicus (Rat)).